Reading from the N-terminus, the 319-residue chain is Acetyl-coenzyme A carboxylase carboxyl transferase subunit alpha (319 aa).

The CoA carboxyltransferase C-terminal domain maps to 35-296 (NIDEEVHRLR…KAQLLADLAD (262 aa)).

Belongs to the AccA family. Acetyl-CoA carboxylase is a heterohexamer composed of biotin carboxyl carrier protein (AccB), biotin carboxylase (AccC) and two subunits each of ACCase subunit alpha (AccA) and ACCase subunit beta (AccD).

It localises to the cytoplasm. The catalysed reaction is N(6)-carboxybiotinyl-L-lysyl-[protein] + acetyl-CoA = N(6)-biotinyl-L-lysyl-[protein] + malonyl-CoA. The protein operates within lipid metabolism; malonyl-CoA biosynthesis; malonyl-CoA from acetyl-CoA: step 1/1. Functionally, component of the acetyl coenzyme A carboxylase (ACC) complex. First, biotin carboxylase catalyzes the carboxylation of biotin on its carrier protein (BCCP) and then the CO(2) group is transferred by the carboxyltransferase to acetyl-CoA to form malonyl-CoA. The protein is Acetyl-coenzyme A carboxylase carboxyl transferase subunit alpha of Klebsiella pneumoniae subsp. pneumoniae (strain ATCC 700721 / MGH 78578).